The sequence spans 259 residues: Protein LEAD-SENSITIVE 1 (259 aa).

In terms of domain architecture, LRAT spans 20 to 168 (YSWRTAYIYA…CKTALLVLEG (149 aa)). Catalysis depends on residues histidine 30 and histidine 42. Cysteine 152 acts as the Acyl-thioester intermediate in catalysis.

As to expression, highly expressed in inflorescences, siliques and stems, and, to a lower extent, in roots and leaves.

The protein resides in the cytoplasm. Its function is as follows. Confers tolerance to lead ions (Pb) stress mediated by Pb(NO(3))(2) probably by promoting Pb accumulation leading to subsequent glutathione-dependent phytochelatin (PC) synthesis and related gene expression, including PDR12/ABCG40, GSH1, GSH2, GR1, GR2, PCS1 and PCS2. This is Protein LEAD-SENSITIVE 1 from Arabidopsis thaliana (Mouse-ear cress).